The chain runs to 626 residues: ATP-dependent zinc metalloprotease FtsH (626 aa).

The Cytoplasmic segment spans residues 1 to 7 (MNGNRPN). Residues 8 to 28 (YISLIFAALVILSLFWLVRSF) form a helical membrane-spanning segment. The Periplasmic portion of the chain corresponds to 29-108 (YFDTSAPSKM…VTGEKGVSSS (80 aa)). Residues 109-129 (FWVNVIGNVIFIGFLLFMFFF) form a helical membrane-spanning segment. The Cytoplasmic portion of the chain corresponds to 130–626 (MMRTISGRNN…RAAAGSEQDS (497 aa)). 202-209 (GPPGTGKT) contacts ATP. His-424 provides a ligand contact to Zn(2+). The active site involves Glu-425. Residues His-428 and Asp-501 each coordinate Zn(2+).

This sequence in the central section; belongs to the AAA ATPase family. In the C-terminal section; belongs to the peptidase M41 family. As to quaternary structure, homohexamer. It depends on Zn(2+) as a cofactor.

The protein localises to the cell inner membrane. In terms of biological role, acts as a processive, ATP-dependent zinc metallopeptidase for both cytoplasmic and membrane proteins. Plays a role in the quality control of integral membrane proteins. This chain is ATP-dependent zinc metalloprotease FtsH, found in Pseudothermotoga lettingae (strain ATCC BAA-301 / DSM 14385 / NBRC 107922 / TMO) (Thermotoga lettingae).